Consider the following 263-residue polypeptide: 3-methyl-2-oxobutanoate hydroxymethyltransferase (263 aa).

Positions 45 and 84 each coordinate Mg(2+). 3-methyl-2-oxobutanoate-binding positions include 45–46 (DS), D84, and K113. E115 lines the Mg(2+) pocket. The active-site Proton acceptor is E182.

Belongs to the PanB family. Homodecamer; pentamer of dimers. Mg(2+) is required as a cofactor.

The protein localises to the cytoplasm. It catalyses the reaction 3-methyl-2-oxobutanoate + (6R)-5,10-methylene-5,6,7,8-tetrahydrofolate + H2O = 2-dehydropantoate + (6S)-5,6,7,8-tetrahydrofolate. It participates in cofactor biosynthesis; coenzyme A biosynthesis. In terms of biological role, catalyzes the reversible reaction in which hydroxymethyl group from 5,10-methylenetetrahydrofolate is transferred onto alpha-ketoisovalerate to form ketopantoate. This chain is 3-methyl-2-oxobutanoate hydroxymethyltransferase, found in Ignicoccus hospitalis (strain KIN4/I / DSM 18386 / JCM 14125).